The sequence spans 122 residues: Large ribosomal subunit protein uL14 (122 aa).

It belongs to the universal ribosomal protein uL14 family. In terms of assembly, part of the 50S ribosomal subunit. Forms a cluster with proteins L3 and L19. In the 70S ribosome, L14 and L19 interact and together make contacts with the 16S rRNA in bridges B5 and B8.

Binds to 23S rRNA. Forms part of two intersubunit bridges in the 70S ribosome. The sequence is that of Large ribosomal subunit protein uL14 from Desulfotalea psychrophila (strain LSv54 / DSM 12343).